The primary structure comprises 484 residues: Endoglucanase 3 (484 aa).

The first 21 residues, 1–21, serve as a signal peptide directing secretion; sequence MASPFFFVFLLSALSLENTYA. The active-site Nucleophile is D77. A glycan (N-linked (GlcNAc...) asparagine) is linked at N370. Residues H402, D453, and E462 contribute to the active site.

Belongs to the glycosyl hydrolase 9 (cellulase E) family. Specifically expressed in root cap cells.

The protein resides in the secreted. It carries out the reaction Endohydrolysis of (1-&gt;4)-beta-D-glucosidic linkages in cellulose, lichenin and cereal beta-D-glucans.. Its function is as follows. May be involved in the sloughing (cell-cell separation) of the root cap cells from root tip. This chain is Endoglucanase 3 (CEL5), found in Arabidopsis thaliana (Mouse-ear cress).